We begin with the raw amino-acid sequence, 150 residues long: uncharacterized protein (150 aa).

This is an uncharacterized protein from Streptomyces lincolnensis.